Consider the following 269-residue polypeptide: Shikimate dehydrogenase (NADP(+)) (269 aa).

Residues serine 17–serine 19 and threonine 64 contribute to the shikimate site. The active-site Proton acceptor is the lysine 68. NADP(+) is bound at residue glutamate 80. The shikimate site is built by asparagine 89 and aspartate 105. NADP(+) is bound by residues glycine 130 to alanine 134, asparagine 154 to lysine 159, and methionine 213. A shikimate-binding site is contributed by tyrosine 215. Position 237 (glycine 237) interacts with NADP(+).

This sequence belongs to the shikimate dehydrogenase family. As to quaternary structure, homodimer.

The enzyme catalyses shikimate + NADP(+) = 3-dehydroshikimate + NADPH + H(+). It functions in the pathway metabolic intermediate biosynthesis; chorismate biosynthesis; chorismate from D-erythrose 4-phosphate and phosphoenolpyruvate: step 4/7. Functionally, involved in the biosynthesis of the chorismate, which leads to the biosynthesis of aromatic amino acids. Catalyzes the reversible NADPH linked reduction of 3-dehydroshikimate (DHSA) to yield shikimate (SA). The polypeptide is Shikimate dehydrogenase (NADP(+)) (Neisseria lactamica).